The chain runs to 317 residues: Melanocyte-stimulating hormone receptor (317 aa).

Residues Met-1–Glu-37 are Extracellular-facing. N-linked (GlcNAc...) asparagine glycosylation occurs at Asn-29. Residues Val-38–Ile-63 form a helical membrane-spanning segment. The Cytoplasmic portion of the chain corresponds to Ala-64–Pro-72. Residues Met-73 to Leu-93 form a helical membrane-spanning segment. Residues Glu-94–Asn-118 lie on the Extracellular side of the membrane. A helical transmembrane segment spans residues Thr-119–Leu-140. Over Asp-141 to Arg-163 the chain is Cytoplasmic. The helical transmembrane segment at Ala-164 to Cys-183 threads the bilayer. Over Asp-184–Cys-191 the chain is Extracellular. A helical transmembrane segment spans residues Leu-192–Leu-211. Topologically, residues Ala-212–Ala-240 are cytoplasmic. A helical membrane pass occupies residues Ala-241 to Leu-266. At Cys-267–Asn-279 the chain is on the extracellular side. Residues Phe-280 to Phe-300 traverse the membrane as a helical segment. The Cytoplasmic portion of the chain corresponds to Arg-301–Trp-317. Cys-315 carries the S-palmitoyl cysteine lipid modification.

It belongs to the G-protein coupled receptor 1 family. In terms of assembly, interacts with MGRN1, but does not undergo MGRN1-mediated ubiquitination; this interaction competes with GNAS-binding and thus inhibits agonist-induced cAMP production. Interacts with OPN3; the interaction results in a decrease in MC1R-mediated cAMP signaling and ultimately a decrease in melanin production in melanocytes.

Its subcellular location is the cell membrane. In terms of biological role, receptor for MSH (alpha, beta and gamma) and ACTH. The activity of this receptor is mediated by G proteins which activate adenylate cyclase. Mediates melanogenesis, the production of eumelanin (black/brown) and phaeomelanin (red/yellow), via regulation of cAMP signaling in melanocytes. The protein is Melanocyte-stimulating hormone receptor (MC1R) of Alouatta seniculus (Red howler monkey).